Here is a 393-residue protein sequence, read N- to C-terminus: MTRVVLAAAYRTPIGVFGGAFKDVPAYDLGATLIEHIIKETGLNPSEIDEVIIGNVLQAGQGQNPARIAAMKGGLPETVPAFTVNKVCGSGLKSIQLAYQSIVTGENDIVLAGGMENMSQSPMLVNNSRFGFKMGHQSMVDSMVYDGLTDVFNQYHMGITAENLVEQYGISREEQDTFAVNSQQKAVRAQQNGEFDSEIVPVSIPQRKGEPIVVTKDEGVRENVSVEKLSRLRPAFKKDGTVTAGNASGINDGAAMMLVMSEDKAKELNIEPLAVLDGFGSHGVDPSIMGIAPVGAVEKALKRSKKELSDIDVFELNEAFAAQSLAVDRELKLPPEKVNVKGGAIALGHPIGASGARVLVTLLHQLNDEVETGLTSLCIGGGQAIAAVVSKYK.

The active-site Acyl-thioester intermediate is cysteine 88. Residues histidine 349 and cysteine 378 each act as proton acceptor in the active site.

Belongs to the thiolase-like superfamily. Thiolase family.

The protein resides in the cytoplasm. It carries out the reaction 2 acetyl-CoA = acetoacetyl-CoA + CoA. The protein is Probable acetyl-CoA acyltransferase of Staphylococcus aureus (strain NCTC 8325 / PS 47).